The following is a 277-amino-acid chain: Carbonyl reductase [NADPH] 1 (277 aa).

Serine 2 carries the N-acetylserine modification. Serine 2 is subject to Phosphoserine. Residues 10–34, 63–64, and asparagine 90 contribute to the NADP(+) site; these read VTGA…GDVV and DI. Glutathione-binding positions include 95-97 and glutamine 106; that span reads FKV. Substrate is bound at residue serine 140. Glutathione is bound at residue 193-194; it reads AY. Tyrosine 194 (proton acceptor) is an active-site residue. NADP(+) is bound by residues 194 to 198 and 231 to 233; these read YGVTK and VRT. Lysine 239 is modified (N6-1-carboxyethyl lysine). A disordered region spans residues 258-277; that stretch reads PPGAEGPHGQFVQDKKVEPW.

It belongs to the short-chain dehydrogenases/reductases (SDR) family. Monomer.

It is found in the cytoplasm. It catalyses the reaction a secondary alcohol + NADP(+) = a ketone + NADPH + H(+). It carries out the reaction prostaglandin F2alpha + NADP(+) = prostaglandin E2 + NADPH + H(+). The catalysed reaction is prostaglandin E1 + NADP(+) = 15-oxoprostaglandin E1 + NADPH + H(+). The enzyme catalyses menadione + NADPH + H(+) = menadiol + NADP(+). It catalyses the reaction prostaglandin D2 + NADP(+) = 15-oxoprostaglandin D2 + NADPH + H(+). It carries out the reaction prostaglandin E2 + NADP(+) = 15-oxoprostaglandin E2 + NADPH + H(+). The catalysed reaction is prostaglandin F2alpha + NADP(+) = 15-oxoprostaglandin F2alpha + NADPH + H(+). The enzyme catalyses daunorubicin + NADPH + H(+) = 13-dihydrodaunorubicin + NADP(+). It catalyses the reaction S-nitrosoglutathione + NADPH + H(+) = S-(hydroxysulfenamide)glutathione + NADP(+). It carries out the reaction a primary alcohol + NADP(+) = an aldehyde + NADPH + H(+). The catalysed reaction is cortisol + NADPH + H(+) = 20beta-dihydrocortisol + NADP(+). The enzyme catalyses corticosterone + NADPH + H(+) = 20beta-dihydrocorticosterone + NADP(+). NADPH-dependent reductase with broad substrate specificity. Catalyzes the reduction of a wide variety of carbonyl compounds including quinones, prostaglandins, menadione, plus various xenobiotics. Catalyzes the reduction of the antitumor anthracyclines doxorubicin and daunorubicin to the cardiotoxic compounds doxorubicinol and daunorubicinol. Can convert prostaglandin E to prostaglandin F2-alpha. Can bind glutathione, which explains its higher affinity for glutathione-conjugated substrates. Catalyzes the reduction of S-nitrosoglutathione. In addition, participates in the glucocorticoid metabolism by catalyzing the NADPH-dependent cortisol/corticosterone into 20beta-dihydrocortisol (20b-DHF) or 20beta-corticosterone (20b-DHB), which are weak agonists of NR3C1 and NR3C2 in adipose tissue. The protein is Carbonyl reductase [NADPH] 1 of Rattus norvegicus (Rat).